The chain runs to 355 residues: Anthranilate phosphoribosyltransferase (355 aa).

5-phospho-alpha-D-ribose 1-diphosphate is bound by residues G102, 105–106 (GD), S110, 112–115 (NIST), 130–138 (KHGNRSVSS), and S142. G102 lines the anthranilate pocket. Position 114 (S114) interacts with Mg(2+). An anthranilate-binding site is contributed by N133. R188 is an anthranilate binding site. Mg(2+)-binding residues include D246 and E247.

The protein belongs to the anthranilate phosphoribosyltransferase family. As to quaternary structure, homodimer. Mg(2+) serves as cofactor.

The catalysed reaction is N-(5-phospho-beta-D-ribosyl)anthranilate + diphosphate = 5-phospho-alpha-D-ribose 1-diphosphate + anthranilate. It participates in amino-acid biosynthesis; L-tryptophan biosynthesis; L-tryptophan from chorismate: step 2/5. Catalyzes the transfer of the phosphoribosyl group of 5-phosphorylribose-1-pyrophosphate (PRPP) to anthranilate to yield N-(5'-phosphoribosyl)-anthranilate (PRA). The polypeptide is Anthranilate phosphoribosyltransferase (Pectobacterium carotovorum subsp. carotovorum (strain PC1)).